A 117-amino-acid polypeptide reads, in one-letter code: Hemerythrin subunit alpha (117 aa).

Fe cation contacts are provided by His24, His53, Glu57, His72, His76, His105, and Asp110.

Belongs to the hemerythrin family. Octamer composed of two types of chains: alpha and beta.

Functionally, hemerythrin is a respiratory protein in blood cells of certain marine worms. The oxygen-binding site in each chain contains two iron atoms. The chain is Hemerythrin subunit alpha from Lingula reevii (Inarticulated brachiopod).